We begin with the raw amino-acid sequence, 165 residues long: Cytochrome c-type biogenesis protein CcmE (165 aa).

The Cytoplasmic portion of the chain corresponds to 1 to 29 (MSATAEQNARNPKGKGGFARTVSQRKRKR). The chain crosses the membrane as a helical; Signal-anchor for type II membrane protein span at residues 30–50 (LFLIGGALAVLAVAVGLMLTA). The Periplasmic segment spans residues 51-165 (FNQDIRFFRT…LKKKGVWEGK (115 aa)). Heme is bound by residues His143 and Tyr147.

The protein belongs to the CcmE/CycJ family.

It is found in the cell inner membrane. Functionally, heme chaperone required for the biogenesis of c-type cytochromes. Transiently binds heme delivered by CcmC and transfers the heme to apo-cytochromes in a process facilitated by CcmF and CcmH. This chain is Cytochrome c-type biogenesis protein CcmE, found in Brucella canis (strain ATCC 23365 / NCTC 10854 / RM-666).